Here is a 541-residue protein sequence, read N- to C-terminus: Membrane protein insertase YidC (541 aa).

Transmembrane regions (helical) follow at residues 7–27 (LLFM…QVDY), 345–365 (LVQN…AILY), 415–435 (LGGC…YWTF), 453–473 (LSAQ…MFLL), and 492–512 (FMPL…VLYW).

This sequence belongs to the OXA1/ALB3/YidC family. Type 1 subfamily. Interacts with the Sec translocase complex via SecD. Specifically interacts with transmembrane segments of nascent integral membrane proteins during membrane integration.

The protein resides in the cell inner membrane. In terms of biological role, required for the insertion and/or proper folding and/or complex formation of integral membrane proteins into the membrane. Involved in integration of membrane proteins that insert both dependently and independently of the Sec translocase complex, as well as at least some lipoproteins. Aids folding of multispanning membrane proteins. In Histophilus somni (strain 129Pt) (Haemophilus somnus), this protein is Membrane protein insertase YidC.